A 79-amino-acid chain; its full sequence is Small proline-rich protein 4 (79 aa).

Positions 1 to 26 (MSSQQQQRQQQQCPPQRAQQQQVKQP) are enriched in low complexity. Residues 1–79 (MSSQQQQRQQ…AQQASKSKQK (79 aa)) are disordered. The segment covering 66–79 (KCPSAQQASKSKQK) has biased composition (polar residues).

This sequence belongs to the cornifin (SPRR) family. Post-translationally, cross-linked to membrane proteins by transglutaminase.

Its subcellular location is the cytoplasm. The protein resides in the cell cortex. Its function is as follows. Cross-linked envelope protein of keratinocytes. Involved in UV-induced cornification. This is Small proline-rich protein 4 (SPRR4) from Homo sapiens (Human).